We begin with the raw amino-acid sequence, 195 residues long: dITP/XTP pyrophosphatase (195 aa).

8–13 (SNNQGK) contacts substrate. Mg(2+) is bound by residues glutamate 39 and aspartate 68. Catalysis depends on aspartate 68, which acts as the Proton acceptor. Substrate contacts are provided by residues serine 69, 149–152 (FGYD), lysine 172, and 177–178 (HR).

It belongs to the HAM1 NTPase family. Homodimer. Requires Mg(2+) as cofactor.

The enzyme catalyses XTP + H2O = XMP + diphosphate + H(+). It catalyses the reaction dITP + H2O = dIMP + diphosphate + H(+). It carries out the reaction ITP + H2O = IMP + diphosphate + H(+). In terms of biological role, pyrophosphatase that catalyzes the hydrolysis of nucleoside triphosphates to their monophosphate derivatives, with a high preference for the non-canonical purine nucleotides XTP (xanthosine triphosphate), dITP (deoxyinosine triphosphate) and ITP. Seems to function as a house-cleaning enzyme that removes non-canonical purine nucleotides from the nucleotide pool, thus preventing their incorporation into DNA/RNA and avoiding chromosomal lesions. The polypeptide is dITP/XTP pyrophosphatase (Staphylococcus aureus (strain Mu50 / ATCC 700699)).